A 369-amino-acid chain; its full sequence is Cellular tumor antigen p53 (369 aa).

Residues 1 to 28 (MAESQEFAELWERNLISTQEAGTCWELI) form a transcription activation (acidic) region. Residues 66–256 (DYPGEHGFKL…KTEESNFRKD (191 aa)) mediate DNA binding. Residues Cys-140, His-143, Cys-202, and Cys-206 each coordinate Zn(2+). The interval 237-244 (RVCACPGR) is interaction with DNA. The segment covering 246–263 (RKTEESNFRKDQETKTLD) has biased composition (basic and acidic residues). Disordered regions lie at residues 246–296 (RKTE…SGSS) and 318–369 (NDSL…SDSD). Residues 269-281 (NKRSLTKDSTSSV) show a composition bias toward polar residues. Residues 270–289 (KRSLTKDSTSSVPRPEGSKK) carry the Bipartite nuclear localization signal motif. The oligomerization stretch occupies residues 298–329 (EEIYTLQVRGKERYEMLKKINDSLELSDVVPP). The short motif at 312–323 (EMLKKINDSLEL) is the Nuclear export signal element. A basic (repression of DNA-binding) region spans residues 342 to 365 (KGKKKDGQTPEPKRGKKLMVKDEK). Basic and acidic residues predominate over residues 346-369 (KDGQTPEPKRGKKLMVKDEKSDSD).

It belongs to the p53 family. As to quaternary structure, binds DNA as a homotetramer. Zn(2+) is required as a cofactor.

The protein resides in the cytoplasm. It is found in the nucleus. Functionally, multifunctional transcription factor that induces cell cycle arrest, DNA repair or apoptosis upon binding to its target DNA sequence. Acts as a tumor suppressor in many tumor types; induces growth arrest or apoptosis depending on the physiological circumstances and cell type. Negatively regulates cell division by controlling expression of a set of genes required for this process. One of the activated genes is an inhibitor of cyclin-dependent kinases. Apoptosis induction seems to be mediated either by stimulation of BAX and FAS antigen expression, or by repression of Bcl-2 expression. In Barbus barbus (Barbel), this protein is Cellular tumor antigen p53 (tp53).